The chain runs to 858 residues: Gamma-secretase-activating protein (858 aa).

This sequence belongs to the GSAP family. In terms of assembly, interacts with APP; specifically interacts with the CTF-alpha product of APP. Interacts with the gamma-secretase complex. In terms of processing, the protein is first synthesized as a holoprotein form of 98 kDa and rapidly processed into the gamma-secretase-activating protein 16 kDa C-terminal form, which constitutes the predominant form.

The protein resides in the golgi apparatus. The protein localises to the trans-Golgi network. Its function is as follows. Regulator of gamma-secretase activity, which specifically activates the production of amyloid-beta protein (amyloid-beta protein 40 and amyloid-beta protein 42), without affecting the cleavage of other gamma-secretase targets such has Notch. The gamma-secretase complex is an endoprotease complex that catalyzes the intramembrane cleavage of integral membrane proteins such as Notch receptors and APP (amyloid-beta precursor protein). Specifically promotes the gamma-cleavage of APP CTF-alpha (also named APP-CTF) by the gamma-secretase complex to generate amyloid-beta, while it reduces the epsilon-cleavage of APP CTF-alpha, leading to a low production of AICD. The chain is Gamma-secretase-activating protein (Gsap) from Mus musculus (Mouse).